Consider the following 368-residue polypeptide: Uroporphyrinogen decarboxylase (368 aa).

Substrate contacts are provided by residues 41–45 (RQAGR), aspartate 91, tyrosine 168, serine 223, and histidine 345.

The protein belongs to the uroporphyrinogen decarboxylase family. As to quaternary structure, homodimer.

It is found in the cytoplasm. The catalysed reaction is uroporphyrinogen III + 4 H(+) = coproporphyrinogen III + 4 CO2. It functions in the pathway porphyrin-containing compound metabolism; protoporphyrin-IX biosynthesis; coproporphyrinogen-III from 5-aminolevulinate: step 4/4. Its function is as follows. Catalyzes the decarboxylation of four acetate groups of uroporphyrinogen-III to yield coproporphyrinogen-III. The protein is Uroporphyrinogen decarboxylase of Psychrobacter sp. (strain PRwf-1).